Here is a 706-residue protein sequence, read N- to C-terminus: Vitamin B12-dependent ribonucleoside-diphosphate reductase (706 aa).

The ATP-cone domain occupies 21 to 109 (AKVRRRDGTL…IYRQRRAELR (89 aa)). Residues Ser191, 206-207 (GC), Gly235, 389-393 (NPCGE), and 534-538 (PTGTI) each bind substrate. A disulfide bridge connects residues Cys207 and Cys402. The Proton acceptor role is filled by Asn389. Cys391 functions as the Cysteine radical intermediate in the catalytic mechanism. Catalysis depends on Glu393, which acts as the Proton acceptor.

The protein belongs to the ribonucleoside diphosphate reductase class-2 family. Adenosylcob(III)alamin is required as a cofactor.

The enzyme catalyses a 2'-deoxyribonucleoside 5'-diphosphate + [thioredoxin]-disulfide + H2O = a ribonucleoside 5'-diphosphate + [thioredoxin]-dithiol. Functionally, provides the precursors necessary for DNA synthesis. Catalyzes the biosynthesis of deoxyribonucleotides from the corresponding ribonucleotides. The polypeptide is Vitamin B12-dependent ribonucleoside-diphosphate reductase (nrdZ) (Mycobacterium tuberculosis (strain ATCC 25618 / H37Rv)).